Here is a 385-residue protein sequence, read N- to C-terminus: MKNISILGATGSIGTQTLDVIRNDSEAFKLLAVSAHSNFKKMIEIIDEFKPELVVMVDKLAYNKVLDYCCEKKLKTSVKVGYEAFNEVASYKDSNIVVTSIVGMIGLIPTLEAIKAGKDIALANKETLVVAGELVTKEAKKYGVNILPVDSEHGAIFQCLQGNKYKDINKILLTASGGPFRGKSFDELNNVTLNDALNHPKWTMGRKITIDSATLMNKGLEVIEAHWLFNVDYEKIQVLVHPQSIVHSMVQYKDGSVIAQLGPTDMRLPIQYALNYPVRKERIVEPVDFYSTPDLHFEKPDMDTFRCLRLAYDAGMAGGIMPAILNSANEYAVDLFLKDKIKFTNIQEIIEDALNHFENVNNLTANTIINKSNEVTKYLKGKIGF.

Residues T10, G11, S12, I13, N38, and N124 each coordinate NADPH. Position 125 (K125) interacts with 1-deoxy-D-xylulose 5-phosphate. Residue E126 participates in NADPH binding. Residue D150 participates in Mn(2+) binding. 1-deoxy-D-xylulose 5-phosphate-binding residues include S151, E152, S176, and H199. E152 is a Mn(2+) binding site. G205 provides a ligand contact to NADPH. Residues S212, N217, K218, and E221 each coordinate 1-deoxy-D-xylulose 5-phosphate. A Mn(2+)-binding site is contributed by E221.

Belongs to the DXR family. Mg(2+) is required as a cofactor. The cofactor is Mn(2+).

It catalyses the reaction 2-C-methyl-D-erythritol 4-phosphate + NADP(+) = 1-deoxy-D-xylulose 5-phosphate + NADPH + H(+). Its pathway is isoprenoid biosynthesis; isopentenyl diphosphate biosynthesis via DXP pathway; isopentenyl diphosphate from 1-deoxy-D-xylulose 5-phosphate: step 1/6. Catalyzes the NADPH-dependent rearrangement and reduction of 1-deoxy-D-xylulose-5-phosphate (DXP) to 2-C-methyl-D-erythritol 4-phosphate (MEP). The chain is 1-deoxy-D-xylulose 5-phosphate reductoisomerase from Clostridium acetobutylicum (strain ATCC 824 / DSM 792 / JCM 1419 / IAM 19013 / LMG 5710 / NBRC 13948 / NRRL B-527 / VKM B-1787 / 2291 / W).